Here is a 597-residue protein sequence, read N- to C-terminus: Elongation factor 4 (597 aa).

One can recognise a tr-type G domain in the interval 2-184 (KHIRNFSIIA…KIVSAIPAPQ (183 aa)). GTP is bound by residues 14-19 (DHGKST) and 131-134 (NKID).

The protein belongs to the TRAFAC class translation factor GTPase superfamily. Classic translation factor GTPase family. LepA subfamily.

It is found in the cell inner membrane. The catalysed reaction is GTP + H2O = GDP + phosphate + H(+). Its function is as follows. Required for accurate and efficient protein synthesis under certain stress conditions. May act as a fidelity factor of the translation reaction, by catalyzing a one-codon backward translocation of tRNAs on improperly translocated ribosomes. Back-translocation proceeds from a post-translocation (POST) complex to a pre-translocation (PRE) complex, thus giving elongation factor G a second chance to translocate the tRNAs correctly. Binds to ribosomes in a GTP-dependent manner. The chain is Elongation factor 4 from Vibrio cholerae serotype O1 (strain ATCC 39541 / Classical Ogawa 395 / O395).